Consider the following 252-residue polypeptide: Carbohydrate deacetylase (252 aa).

Positions 59 and 122 each coordinate Mg(2+).

It belongs to the YdjC deacetylase family. In terms of assembly, homodimer. Mg(2+) is required as a cofactor.

Probably catalyzes the deacetylation of acetylated carbohydrates an important step in the degradation of oligosaccharides. The sequence is that of Carbohydrate deacetylase from Vibrio vulnificus (strain YJ016).